The following is a 526-amino-acid chain: Protein ERGIC-53-like (526 aa).

Residues 1–25 form the signal peptide; the sequence is MPAVSGPGPLFCLLLLLLDPHSPET. The Lumenal portion of the chain corresponds to 26–462; sequence GCPPLRRFEY…QPPRASSCLQ (437 aa). Residues 31–252 form the L-type lectin-like domain; the sequence is RRFEYKLSFK…DVLSFLTFSL (222 aa). The N-linked (GlcNAc...) asparagine glycan is linked to Asn75. Cys176 and Cys215 are joined by a disulfide. Residues 463–483 traverse the membrane as a helical segment; sequence PGIFLFYLLIQTVGFFGYVHF. Topologically, residues 484 to 526 are cytoplasmic; that stretch reads RQELNKSLQECLSTGSLPLGPAPHTPRALGILRRQPLPASMPA.

As to expression, highly expressed in normal and neoplastic prostate. Also expressed in cardiac atrium, salivary gland, spleen and selective cells in the CNS.

Its subcellular location is the endoplasmic reticulum-Golgi intermediate compartment membrane. This Homo sapiens (Human) protein is Protein ERGIC-53-like (LMAN1L).